Consider the following 305-residue polypeptide: MIKQRTLKQGIKVTGVGLHSGNKVTLNLRPAAANTGVVYCRTDLNPPVSFPADAKAVRDTMLCTALVNDEGVRISTVEHLNAALAGLGIDNIIIEVDAPEIPIMDGSASPFVYLLLDAGIEEQDAPKKFIRVKKKVRVEDGDKWAEILPYNGFRLNFTIDFNHPAITKNLSTYTLDFSAQKFVQQISRARTFAFMKDIEYLQSQGLALGGSLDNAIVLDNYRVLNEEGLRFKDELVRHKMLDSIGDLFMCGYNMIGEFKAYKSGHGLNNKLLRALLEDQEAWEFATFEDKEKVPQGYTVGAQVLI.

Zn(2+)-binding residues include His-79, His-238, and Asp-242. Residue His-265 is the Proton donor of the active site.

This sequence belongs to the LpxC family. The cofactor is Zn(2+).

It catalyses the reaction a UDP-3-O-[(3R)-3-hydroxyacyl]-N-acetyl-alpha-D-glucosamine + H2O = a UDP-3-O-[(3R)-3-hydroxyacyl]-alpha-D-glucosamine + acetate. It functions in the pathway glycolipid biosynthesis; lipid IV(A) biosynthesis; lipid IV(A) from (3R)-3-hydroxytetradecanoyl-[acyl-carrier-protein] and UDP-N-acetyl-alpha-D-glucosamine: step 2/6. Catalyzes the hydrolysis of UDP-3-O-myristoyl-N-acetylglucosamine to form UDP-3-O-myristoylglucosamine and acetate, the committed step in lipid A biosynthesis. This Actinobacillus succinogenes (strain ATCC 55618 / DSM 22257 / CCUG 43843 / 130Z) protein is UDP-3-O-acyl-N-acetylglucosamine deacetylase.